Consider the following 287-residue polypeptide: 4,4'-diapophytoene synthase (287 aa).

(2E,6E)-farnesyl diphosphate contacts are provided by residues 18-21 (HSKS), Tyr-41, and Arg-45. Residues Asp-48 and Asp-52 each contribute to the Mg(2+) site. Residue Gln-165 coordinates (2E,6E)-farnesyl diphosphate. Asn-168 lines the Mg(2+) pocket. Arg-171 contacts (2E,6E)-farnesyl diphosphate. A Mg(2+)-binding site is contributed by Asp-172. A (2E,6E)-farnesyl diphosphate-binding site is contributed by Tyr-248.

It belongs to the phytoene/squalene synthase family. CrtM subfamily. Mg(2+) is required as a cofactor.

It catalyses the reaction 2 (2E,6E)-farnesyl diphosphate = 15-cis-4,4'-diapophytoene + 2 diphosphate. Its pathway is carotenoid biosynthesis; staphyloxanthin biosynthesis; staphyloxanthin from farnesyl diphosphate: step 1/5. In terms of biological role, involved in the biosynthesis of the yellow-orange carotenoid staphyloxanthin, which plays a role in the virulence via its protective function against oxidative stress. Catalyzes the head-to-head condensation of two molecules of farnesyl diphosphate (FPP) into the colorless C(30) carotenoid 4,4'-diapophytoene (dehydrosqualene). The sequence is that of 4,4'-diapophytoene synthase (crtM) from Staphylococcus aureus (strain bovine RF122 / ET3-1).